The sequence spans 143 residues: Ribonuclease P protein component 2 (143 aa).

It belongs to the eukaryotic/archaeal RNase P protein component 2 family. As to quaternary structure, consists of a catalytic RNA component and at least 4-5 protein subunits.

The protein resides in the cytoplasm. The enzyme catalyses Endonucleolytic cleavage of RNA, removing 5'-extranucleotides from tRNA precursor.. Functionally, part of ribonuclease P, a protein complex that generates mature tRNA molecules by cleaving their 5'-ends. The chain is Ribonuclease P protein component 2 from Saccharolobus islandicus (strain Y.N.15.51 / Yellowstone #2) (Sulfolobus islandicus).